A 189-amino-acid polypeptide reads, in one-letter code: Protein F29A7.6 (189 aa).

Residues 124-161 are disordered; the sequence is KSLGGQKLAALDKKSQSKRERRQQNERNEETTGGRRFN. Residues 133 to 161 show a composition bias toward basic and acidic residues; the sequence is ALDKKSQSKRERRQQNERNEETTGGRRFN.

This sequence belongs to the MPP6 family.

This is Protein F29A7.6 from Caenorhabditis elegans.